Here is a 231-residue protein sequence, read N- to C-terminus: GFP-like fluorescent chromoprotein FP506 (231 aa).

A cross-link (5-imidazolinone (Asn-Gly)) is located at residues 66 to 68; it reads NYG. A 2,3-didehydrotyrosine modification is found at tyrosine 67.

This sequence belongs to the GFP family. Contains a chromophore consisting of modified amino acid residues. The chromophore is formed by autocatalytic backbone condensation between Xaa-N and Gly-(N+2), and oxidation of Tyr-(N+1) to didehydrotyrosine. Maturation of the chromophore requires nothing other than molecular oxygen. The precise stereochemistry of the tyrosine has not been determined. Tentacle and oral disk.

Its function is as follows. Pigment protein that is yellow-green in color. The chain is GFP-like fluorescent chromoprotein FP506 from Zoanthus sp. (Green polyp).